The following is a 389-amino-acid chain: tRNA (guanine-N(7)-)-methyltransferase non-catalytic subunit TRM82 (389 aa).

3 WD repeats span residues 44-86, 134-179, and 184-222; these read QNVP…HQLK, GHTS…KGFL, and QFVSQIHLFEICKESRLVSGGGEGKLFFWDWFREVLITE.

It belongs to the WD repeat TRM82 family. Forms a heterodimer with the catalytic subunit TRM8.

It is found in the nucleus. It functions in the pathway tRNA modification; N(7)-methylguanine-tRNA biosynthesis. In terms of biological role, required for the formation of N(7)-methylguanine at position 46 (m7G46) in tRNA. In the complex, it is required to stabilize and induce conformational changes of the catalytic subunit. The polypeptide is tRNA (guanine-N(7)-)-methyltransferase non-catalytic subunit TRM82 (Lodderomyces elongisporus (strain ATCC 11503 / CBS 2605 / JCM 1781 / NBRC 1676 / NRRL YB-4239) (Yeast)).